The chain runs to 553 residues: Fusion glycoprotein F0 (553 aa).

The N-terminal stretch at 1–31 (MGSRSSTRIPVPLMLTVRIMLALSCVCPTSS) is a signal peptide. Topologically, residues 32–500 (LDGRPLAAAG…VNVKLTSTSA (469 aa)) are extracellular. 5 cysteine pairs are disulfide-bonded: Cys76-Cys199, Cys338-Cys347, Cys362-Cys370, Cys394-Cys399, and Cys401-Cys424. Asn85 carries N-linked (GlcNAc...) asparagine; by host glycosylation. Residues 117-141 (LIGAIIGGVALGVATAAQITAASAL) form a fusion peptide region. A coiled-coil region spans residues 142 to 170 (IQANQNAANILRLKESIAATNEAVHEVTD). A glycan (N-linked (GlcNAc...) asparagine; by host) is linked at Asn191. The N-linked (GlcNAc...) asparagine; by host glycan is linked to Asn366. 2 N-linked (GlcNAc...) asparagine; by host glycosylation sites follow: Asn447 and Asn471. Residues 466–491 (ELGNVNNSISNALDKLEESNSKLDKV) are a coiled coil. Residues 501–521 (LITYIFLTVISLVCGILSLVL) form a helical membrane-spanning segment. Residues 522–553 (ACYLMYKQKAQQKTLLWLGNNTLDQMRATTKM) are Cytoplasmic-facing. Residue Cys523 is the site of S-palmitoyl cysteine; by host attachment.

Belongs to the paramyxoviruses fusion glycoprotein family. As to quaternary structure, homotrimer of disulfide-linked F1-F2. In terms of processing, the inactive precursor F0 is glycosylated and proteolytically cleaved into F1 and F2 to be functionally active. The cleavage is mediated by cellular proteases during the transport and maturation of the polypeptide.

It is found in the virion membrane. The protein localises to the host cell membrane. Class I viral fusion protein. Under the current model, the protein has at least 3 conformational states: pre-fusion native state, pre-hairpin intermediate state, and post-fusion hairpin state. During viral and plasma cell membrane fusion, the heptad repeat (HR) regions assume a trimer-of-hairpins structure, positioning the fusion peptide in close proximity to the C-terminal region of the ectodomain. The formation of this structure appears to drive apposition and subsequent fusion of viral and plasma cell membranes. Directs fusion of viral and cellular membranes leading to delivery of the nucleocapsid into the cytoplasm. This fusion is pH independent and occurs directly at the outer cell membrane. The trimer of F1-F2 (F protein) probably interacts with HN at the virion surface. Upon HN binding to its cellular receptor, the hydrophobic fusion peptide is unmasked and interacts with the cellular membrane, inducing the fusion between cell and virion membranes. Later in infection, F proteins expressed at the plasma membrane of infected cells could mediate fusion with adjacent cells to form syncytia, a cytopathic effect that could lead to tissue necrosis. The polypeptide is Fusion glycoprotein F0 (F) (Newcastle disease virus (strain D26/76) (NDV)).